Here is a 280-residue protein sequence, read N- to C-terminus: Elongation factor Ts (280 aa).

The interval 82-85 (TDFV) is involved in Mg(2+) ion dislocation from EF-Tu.

The protein belongs to the EF-Ts family.

Its subcellular location is the cytoplasm. Functionally, associates with the EF-Tu.GDP complex and induces the exchange of GDP to GTP. It remains bound to the aminoacyl-tRNA.EF-Tu.GTP complex up to the GTP hydrolysis stage on the ribosome. The sequence is that of Elongation factor Ts from Baumannia cicadellinicola subsp. Homalodisca coagulata.